We begin with the raw amino-acid sequence, 557 residues long: Probable protein kinase UbiB (557 aa).

The Protein kinase domain maps to 121 to 509 (SFDTVPLASA…RKLQTRVVTA (389 aa)). ATP is bound by residues 127–135 (LASASIAQV) and lysine 154. Aspartate 289 functions as the Proton acceptor in the catalytic mechanism. 2 consecutive transmembrane segments (helical) span residues 506–526 (VVTA…YGLH) and 535–555 (VPVW…VAWL).

This sequence belongs to the ABC1 family. UbiB subfamily.

It is found in the cell inner membrane. The protein operates within cofactor biosynthesis; ubiquinone biosynthesis [regulation]. Its function is as follows. Is probably a protein kinase regulator of UbiI activity which is involved in aerobic coenzyme Q (ubiquinone) biosynthesis. In Xanthomonas euvesicatoria pv. vesicatoria (strain 85-10) (Xanthomonas campestris pv. vesicatoria), this protein is Probable protein kinase UbiB.